The following is a 197-amino-acid chain: Xanthine phosphoribosyltransferase (197 aa).

Xanthine-binding residues include leucine 20 and threonine 27. 128 to 132 (ANGQA) is a 5-phospho-alpha-D-ribose 1-diphosphate binding site. Xanthine is bound at residue lysine 156.

The protein belongs to the purine/pyrimidine phosphoribosyltransferase family. Xpt subfamily. In terms of assembly, homodimer.

The protein localises to the cytoplasm. The catalysed reaction is XMP + diphosphate = xanthine + 5-phospho-alpha-D-ribose 1-diphosphate. It functions in the pathway purine metabolism; XMP biosynthesis via salvage pathway; XMP from xanthine: step 1/1. In terms of biological role, converts the preformed base xanthine, a product of nucleic acid breakdown, to xanthosine 5'-monophosphate (XMP), so it can be reused for RNA or DNA synthesis. The sequence is that of Xanthine phosphoribosyltransferase from Lactococcus lactis subsp. lactis (strain IL1403) (Streptococcus lactis).